The sequence spans 109 residues: Parvalbumin beta (109 aa).

Residue Ser-1 is modified to N-acetylserine. EF-hand domains follow at residues 38–73 and 77–109; these read KTPDVIKKAFYVIDQDKSGFIEEDELKLFLQNFASS and LTDKETETFLKAGDSDGDGKIGIDEFADLVKEA. Ca(2+) contacts are provided by Asp-51, Asp-53, Ser-55, Phe-57, Glu-59, Glu-62, Asp-90, Asp-92, Asp-94, Lys-96, and Glu-101.

Belongs to the parvalbumin family.

In muscle, parvalbumin is thought to be involved in relaxation after contraction. It binds two calcium ions. This is Parvalbumin beta from Opsanus tau (Oyster toadfish).